Here is an 832-residue protein sequence, read N- to C-terminus: MPLEMDQKVNKLTFGCQRSSTSDDDSGCAMEEYTWVPPGLRPEQVQLYFACLPEEKIPYVNSIGEKYRIKQLLYQLPPHDNEVRYCQSLCEEEKKELQMFSGQRKKEALGRGNIKMLSRAVMHAMCEKCGEKINGGEIAIFVSRAGPGVCWHPSCFVCSTCNELLVDLIYFYQDGKIHCGRHHAELLKPRCSACDEIIFADECTEAEGRHWHMNHFCCYECETVLGGQRYIMKDGRPFCCGCFESHYAEYCESCGDHIGVDHAQMTYDGQHWHATETCFSCAQCKVSLLGCPFLPKKGRIYCSKACSLGEDVHASDSSDSAFQSARSRESRRSVRMGKSSRSADQCRQSLLLSPALNYKFPGMSGNADDTLSRKMDDLGISRQGAGFDNDFWKARDEQETPEDHEEWAEHDDYMTQLLLKFGEKGLFQQPSEDNRSTEHWMSENIKGKNDLQRNNRNKSLASKKYQSDMYWTQSQDGLGDSAYGSHPGPASSRKLQELDMDHGASAYMHEKMPWYKRSLECLSDNLKPQNENIRDSMDSLALSNITGASVDGENKSRPSLFCYQNFQDLNTRDCEKMSNMGTLNSSMLNRSTESLKSLTSEICQEKPPPEEKPMHTSALRRSKSQTRPQVKFSDDVIDNGDYGSIEIRQPPMSERSRRRVYNFEERSQRPHHHRRRKSRKSRSENALHLATDSKPSGKERNRFYTAEDYERLFHNKSAHQVQAYIQNADLFGQYSNAASNVGLPSKVAGKFLGLYGEDEDSWCSTCSSSSSDSEEEGYFLGQPIPKPRPQRYQYFSDDLCSPTNALSSSQFSQRTTKSKKKKGHKGKNCIIS.

One can recognise a PET domain in the interval 14 to 122; the sequence is FGCQRSSTSD…NIKMLSRAVM (109 aa). 3 LIM zinc-binding domains span residues 124–188, 189–249, and 250–313; these read AMCE…ELLK, PRCS…HYAE, and YCES…EDVH. 4 disordered regions span residues 312–346, 428–455, 602–701, and 766–832; these read VHAS…ADQC, QQPS…QRNN, ICQE…KERN, and CSSS…CIIS. Composition is skewed to basic and acidic residues over residues 432–453 and 603–614; these read EDNR…DLQR and CQEKPPPEEKPM. Basic residues-rich tracts occupy residues 669–680 and 816–832; these read RPHHHRRRKSRK and TKSK…CIIS. Position 829 is a cysteine methyl ester (Cys-829). A lipid anchor (S-farnesyl cysteine) is attached at Cys-829. Residues 830-832 constitute a propeptide, removed in mature form; the sequence is IIS.

The protein belongs to the prickle / espinas / testin family. As to quaternary structure, interacts with dvl2/dsh and mapk8/jnk1. As to expression, expressed in the dorsal marginal zone of early gastrulae (stage 10). As gastrulation proceeds, expression expands to include the lateral and ventral marginal zones, excluding the few rows of cells above the blastopore lip. Expression moves dorsally with gastrulation cell movements, and by the end of gastrulation expression is seen in dorsal mesoderm and posterior but not anterior neural ectoderm. Expression becomes down-regulated in mesoderm but remains strong in posterior ectoderm through the neurula stages. During tailbud stages, expressed in the pronephric duct, tailbud, tailtip and forming somites. In the most posterior regions, expressed in notochord and in the floorplate of the neural tube with weak expression in the roofplate. At stage 30, expressed in a complex pattern in the head including strong expression in the lens and otic vesicle.

Its subcellular location is the cell membrane. Functionally, acts in a planar cell polarity (PCP) complex; polarization along the apical/basal axis of epithelial cells. Regulates the polarized assembly of fibronectrin on the surface of the mesoderm during gastrulation. Essential for gastrulation cell movements, cooperating with dvl2/dsh to activate jnk. Acts together with tes to control axial elongation. The chain is Prickle-like protein 1-B (prickle1-b) from Xenopus laevis (African clawed frog).